The chain runs to 264 residues: Thymidylate synthase (264 aa).

Arginine 21 provides a ligand contact to dUMP. Histidine 51 contributes to the (6R)-5,10-methylene-5,6,7,8-tetrahydrofolate binding site. 126-127 (RR) serves as a coordination point for dUMP. The Nucleophile role is filled by cysteine 146. Residues 166–169 (RSAD), asparagine 177, and 207–209 (HIY) each bind dUMP. Aspartate 169 is a binding site for (6R)-5,10-methylene-5,6,7,8-tetrahydrofolate. Residue alanine 263 participates in (6R)-5,10-methylene-5,6,7,8-tetrahydrofolate binding.

This sequence belongs to the thymidylate synthase family. Bacterial-type ThyA subfamily. In terms of assembly, homodimer.

The protein resides in the cytoplasm. The enzyme catalyses dUMP + (6R)-5,10-methylene-5,6,7,8-tetrahydrofolate = 7,8-dihydrofolate + dTMP. Its pathway is pyrimidine metabolism; dTTP biosynthesis. Catalyzes the reductive methylation of 2'-deoxyuridine-5'-monophosphate (dUMP) to 2'-deoxythymidine-5'-monophosphate (dTMP) while utilizing 5,10-methylenetetrahydrofolate (mTHF) as the methyl donor and reductant in the reaction, yielding dihydrofolate (DHF) as a by-product. This enzymatic reaction provides an intracellular de novo source of dTMP, an essential precursor for DNA biosynthesis. The sequence is that of Thymidylate synthase from Bacteroides thetaiotaomicron (strain ATCC 29148 / DSM 2079 / JCM 5827 / CCUG 10774 / NCTC 10582 / VPI-5482 / E50).